We begin with the raw amino-acid sequence, 274 residues long: Copper chaperone for superoxide dismutase (274 aa).

Positions 11–74 constitute an HMA domain; sequence VCALEFAVQM…LLESTGRQAV (64 aa). The Cu cation site is built by Cys22 and Cys25. Lys76 participates in a covalent cross-link: Glycyl lysine isopeptide (Lys-Gly) (interchain with G-Cter in ubiquitin). A superoxide dismutase-like region spans residues 88-234; sequence AAVAILEGCG…LACGIIARSA (147 aa). Cys141 and Cys227 are oxidised to a cystine. Zn(2+) is bound by residues His147, His155, His164, and Asp167. Glycyl lysine isopeptide (Lys-Gly) (interchain with G-Cter in ubiquitin) cross-links involve residues Lys189, Lys216, and Lys241. Residues Cys244 and Cys246 each coordinate Cu cation. The residue at position 267 (Ser267) is a Phosphoserine.

The protein in the C-terminal section; belongs to the Cu-Zn superoxide dismutase family. Homodimer, and heterodimer with SOD1. Interacts with COMMD1. Interacts with XIAP/BIRC4. Interacts with SLC31A1(via C-terminal domain); this interaction is Cu(1+)-mediated. The heterodimer CCS:SOD1 interacts with SLC31A1; this heterotrimer is Cu(1+)-mediated and its maintenance is regulated through SOD1 activation. The cofactor is Cu(2+). It depends on Zn(2+) as a cofactor. In terms of processing, ubiquitinion by XIAP/BIRC4 leads to enhancement of its chaperone activity toward its physiologic target, SOD1, rather than proteasomal degradation. XIAP/BIRC4 preferentially ubiquitinates at Lys-241. In terms of tissue distribution, ubiquitous.

It is found in the cytoplasm. In terms of biological role, delivers copper to copper zinc superoxide dismutase (SOD1). The chain is Copper chaperone for superoxide dismutase from Mus musculus (Mouse).